Consider the following 321-residue polypeptide: Lipoyl synthase (321 aa).

Positions 68, 73, 79, 94, 98, 101, and 308 each coordinate [4Fe-4S] cluster. A Radical SAM core domain is found at 80–297; sequence FNHGTATFMI…KVIALELGFT (218 aa).

This sequence belongs to the radical SAM superfamily. Lipoyl synthase family. Requires [4Fe-4S] cluster as cofactor.

It localises to the cytoplasm. It carries out the reaction [[Fe-S] cluster scaffold protein carrying a second [4Fe-4S](2+) cluster] + N(6)-octanoyl-L-lysyl-[protein] + 2 oxidized [2Fe-2S]-[ferredoxin] + 2 S-adenosyl-L-methionine + 4 H(+) = [[Fe-S] cluster scaffold protein] + N(6)-[(R)-dihydrolipoyl]-L-lysyl-[protein] + 4 Fe(3+) + 2 hydrogen sulfide + 2 5'-deoxyadenosine + 2 L-methionine + 2 reduced [2Fe-2S]-[ferredoxin]. Its pathway is protein modification; protein lipoylation via endogenous pathway; protein N(6)-(lipoyl)lysine from octanoyl-[acyl-carrier-protein]: step 2/2. Catalyzes the radical-mediated insertion of two sulfur atoms into the C-6 and C-8 positions of the octanoyl moiety bound to the lipoyl domains of lipoate-dependent enzymes, thereby converting the octanoylated domains into lipoylated derivatives. The sequence is that of Lipoyl synthase from Aliivibrio salmonicida (strain LFI1238) (Vibrio salmonicida (strain LFI1238)).